Reading from the N-terminus, the 117-residue chain is Large ribosomal subunit protein bL19 (117 aa).

Belongs to the bacterial ribosomal protein bL19 family.

In terms of biological role, this protein is located at the 30S-50S ribosomal subunit interface and may play a role in the structure and function of the aminoacyl-tRNA binding site. This is Large ribosomal subunit protein bL19 from Alkaliphilus metalliredigens (strain QYMF).